The primary structure comprises 422 residues: MLSLIPFTVCAFLALITSKGGSATPSTISLECSENDVCAALETLTRRQDRLQKTLNLCTDDESQFTLTAVVKCTSVIQVPFPNRHFKMAALDLSSGICRALAQPVVASQAYTVSAEILNEAGWKGVNSGHPGLLFNAIDENNFDFVYLRPHSVSGCYQTGYMSAGVNKFVESKRCPNGPPKGGEWFPFSVTVNGQYATVYRSGVLVTTFKTHFASSRARGGVFIFNGYKNVILFRKFKTAPKHFFSKRCKEVVEFPAGYVKMDAGIGSWPKDAFCQVEFGSDGRIASYELKVDLYNFIGRDKANLGHPGVFFNAEDEDNYDFVYFRPHSVGGCFQTGYLLKGKPRFDGAKSASCPKGPPKGKTWFNVKLTVSNATPAGEVRVYLDDTLVTSFNPRYPIKRRGGVLVANGYKNVIYLRNFKIL.

The first 23 residues, 1–23 (MLSLIPFTVCAFLALITSKGGSA), serve as a signal peptide directing secretion.

As to expression, component of the acid-insoluble organic matrix of the aragonitic skeleton (at protein level).

It is found in the secreted. This is an uncharacterized protein from Acropora millepora (Staghorn coral).